The following is a 201-amino-acid chain: 3-isopropylmalate dehydratase small subunit (201 aa).

Belongs to the LeuD family. LeuD type 1 subfamily. Heterodimer of LeuC and LeuD.

The enzyme catalyses (2R,3S)-3-isopropylmalate = (2S)-2-isopropylmalate. It functions in the pathway amino-acid biosynthesis; L-leucine biosynthesis; L-leucine from 3-methyl-2-oxobutanoate: step 2/4. In terms of biological role, catalyzes the isomerization between 2-isopropylmalate and 3-isopropylmalate, via the formation of 2-isopropylmaleate. This chain is 3-isopropylmalate dehydratase small subunit, found in Mesorhizobium japonicum (strain LMG 29417 / CECT 9101 / MAFF 303099) (Mesorhizobium loti (strain MAFF 303099)).